The sequence spans 377 residues: SH2/SH3 adapter protein NCK1 (377 aa).

Residue Ala-2 is modified to N-acetylalanine. Residues 2-61 (AEEVVVVAKFDYVAQQEQELDIKKNERLWLLDDSKSWWRVRNSMNKTGFVPSNYVERKNS) enclose the SH3 1 domain. Phosphoserine occurs at positions 85, 89, 91, and 96. Tyr-105 is modified (phosphotyrosine). The SH3 2 domain occupies 106-165 (DLNMPAYVKFNYMAEREDELSLIKGTKVIVMEKCSDGWWRGSYNGQVGWFPSNYVTEEGD). Ser-166 is modified (phosphoserine). The SH3 3 domain maps to 190-252 (QVLHVVQALY…PKNYVTVMQN (63 aa)). The SH2 domain maps to 282-376 (WYYGKVTRHQ…GEKLYLVKHL (95 aa)).

Interacts (via SH2 domain and SH3 domain 2) with EGFR. Interacts with PAK1 and SOS1. Interacts (via SH3 domains) with PKN2. Associates with BLNK, PLCG1, VAV1 and NCK1 in a B-cell antigen receptor-dependent fashion. Interacts with SOCS7. This interaction is required for nuclear import. Part of a complex containing PPP1R15B, PP1 and NCK1. Interacts with RALGPS1. Interacts with CAV2 (tyrosine phosphorylated form). Interacts with ADAM15. Interacts with FASLG. Directly interacts with RASA1. Interacts with isoform 4 of MINK1. Interacts with FLT1 (tyrosine phosphorylated). Interacts with KDR (tyrosine phosphorylated). Interacts (via SH2 domain) with EPHB1; activates the JUN cascade to regulate cell adhesion. Interacts with EPHA2. Interacts (via SH2 domain) with PDGFRB (tyrosine phosphorylated). Interacts with the inactive form of EIF2AK2/PKR. Interacts with PTPN1. Interacts with INSR/insulin receptor (in response to insulin stimulation); This interaction may mediate PTPN1 recruitment leading to INSR dephosphorylation. Interacts with IRS1. Post-translationally, phosphorylated on Ser and Tyr residues. Phosphorylated in response to activation of EGFR and FcERI. Phosphorylated by activated PDGFRB.

It is found in the cytoplasm. The protein resides in the endoplasmic reticulum. It localises to the nucleus. Its function is as follows. Adapter protein which associates with tyrosine-phosphorylated growth factor receptors, such as KDR and PDGFRB, or their cellular substrates. Maintains low levels of EIF2S1 phosphorylation by promoting its dephosphorylation by PP1. Plays a role in the DNA damage response, not in the detection of the damage by ATM/ATR, but for efficient activation of downstream effectors, such as that of CHEK2. Plays a role in ELK1-dependent transcriptional activation in response to activated Ras signaling. Modulates the activation of EIF2AK2/PKR by dsRNA. May play a role in cell adhesion and migration through interaction with ephrin receptors. The protein is SH2/SH3 adapter protein NCK1 (NCK1) of Homo sapiens (Human).